The sequence spans 779 residues: MERTNTTTFKFFSLGGSNEVGRSCHILQYKGKTVMLDAGIHPAYQGLASLPFYDEFDLSKVDILLISHFHLDHAASLPYVMQRTNFQGRVFMTHPTKAIYRWLLRDFVRVTSIGSSSSSMGTKDEGLFSDEDLVDSFDKIETVDYHSTVDVNGIKFTAFHAGHVLGAAMFQIEIAGLRVLFTGDYSREVDRHLNSAEVPPLSSNVLIVESTFGTATHEPRLNRERKLTQLIHSTVMRGGRVLLPVFALGRAQEIMLILDEYWSQHADELGGGQVPIFYASNLAKKCMSVFQTYVNMMNDDIRKKFRDSQTNPFIFKNISYLRNLEDFQDFGPSVMLASPGMLQSGLSRDLLERWCPEDKNLVLITGYSIEGTMAKFIMLEPDTIPSINNPEITIPRRCQVEEISFAAHVDFQENLEFIEKISAPNIILVHGEANPMGRLKSALLSNFASLKGTDNEVHVFNPRNCVEVDLEFQGVKVAKAVGNIVNEIYKEENVEIKEEIAAKIEPIKEENEDNLDSQAEKGLVDEEEHKDIVVSGILVSDDKNFELDFLSLSDLREHHPDLSTTILRERQSVRVNCKKELIYWHILQMFGEAEVLQDDDRVTNQEPKVKEESKDNLTNTGKLILQIMGDIKLTIVNTLAVVEWTQDLMNDTVADSIIAILMNVDSAPASVKLSSHSCDDHDHNNVQSNAQGKIDEVERVKQISRLFKEQFGDCFTLFLNKDEYASNKEETITGVVTIGKSTAKIDFNNMKILECNSNPLKGRVESLLNIGGNLVTPLC.

Zn(2+) contacts are provided by H68, H70, D72, H73, H163, and D184. H408 serves as the catalytic Proton donor. Residue H430 participates in Zn(2+) binding. S517 is subject to Phosphoserine; by ATM or ATR.

It belongs to the metallo-beta-lactamase superfamily. RNA-metabolizing metallo-beta-lactamase-like family. CPSF2/YSH1 subfamily. In terms of assembly, component of the cleavage and polyadenylation factor (CPF) complex, which is composed of at least PTI1, SYC1, SSU72, GLC7, MPE1, REF2, PFS2, PTA1, YSH1/BRR5, SWD2, CFT2/YDH1, YTH1, CFT1/YHH1, FIP1 and PAP1. Interacts with FIP1, PFS2, RNA14 and YTH1. Zn(2+) serves as cofactor.

The protein localises to the nucleus. In terms of biological role, component of the cleavage and polyadenylation factor (CPF) complex, which plays a key role in polyadenylation-dependent pre-mRNA 3'-end formation and cooperates with cleavage factors including the CFIA complex and NAB4/CFIB. Has endonuclease activity. The polypeptide is Endoribonuclease YSH1 (YSH1) (Saccharomyces cerevisiae (strain ATCC 204508 / S288c) (Baker's yeast)).